A 67-amino-acid polypeptide reads, in one-letter code: Conotoxin TsMMSK-011 (67 aa).

The first 20 residues, 1–20 (MMSKLGVLLTICLLLFPLTA), serve as a signal peptide directing secretion. Residues 21–50 (VQLDGDQPADLPALRTQDIATDHSPWFDPV) constitute a propeptide that is removed on maturation. 3 disulfide bridges follow: Cys53/Cys65, Cys54/Cys61, and Cys58/Cys64. The residue at position 63 (Pro63) is a 4-hydroxyproline.

This sequence belongs to the conotoxin M superfamily. Expressed by the venom duct.

Its subcellular location is the secreted. The polypeptide is Conotoxin TsMMSK-011 (Conus tessulatus (Tessellate cone)).